The primary structure comprises 172 residues: Protein GrpE (172 aa).

The segment covering 1–11 has biased composition (low complexity); the sequence is MSEENNSQNSN. A disordered region spans residues 1-22; it reads MSEENNSQNSNPPNPENGEIAS.

The protein belongs to the GrpE family. Homodimer.

It is found in the cytoplasm. Its function is as follows. Participates actively in the response to hyperosmotic and heat shock by preventing the aggregation of stress-denatured proteins, in association with DnaK and GrpE. It is the nucleotide exchange factor for DnaK and may function as a thermosensor. Unfolded proteins bind initially to DnaJ; upon interaction with the DnaJ-bound protein, DnaK hydrolyzes its bound ATP, resulting in the formation of a stable complex. GrpE releases ADP from DnaK; ATP binding to DnaK triggers the release of the substrate protein, thus completing the reaction cycle. Several rounds of ATP-dependent interactions between DnaJ, DnaK and GrpE are required for fully efficient folding. In Bdellovibrio bacteriovorus (strain ATCC 15356 / DSM 50701 / NCIMB 9529 / HD100), this protein is Protein GrpE.